Here is a 183-residue protein sequence, read N- to C-terminus: Helofensin-1 (183 aa).

The N-terminal stretch at Met1–Gly26 is a signal peptide. Residues Ala27–Ala64 form a C(6)C(4)C(9)C(6)CC 1; approximate repeat. A C(6)C(4)C(9)C(6)CC 2; approximate repeat occupies Arg65–Gln101. The stretch at Arg102–Lys139 is one C(6)C(4)C(9)C(6)CC 3; approximate repeat. A C(6)C(4)C(9)C(6)CC 4; approximate repeat occupies Arg140–Lys177.

It belongs to the beta-defensin family. Helofensin subfamily. As to expression, expressed by the mandibular venom gland.

It localises to the secreted. Lethal toxin which possesses an inhibitory effect on direct electrical stimulation of the isolated hemi-diaphragm of mice. Neither hemorrhagic nor hemolytic activities are detected. Phospholipase A2 activity, proteolytic activity and arginine esterolytic activity are absent. This is Helofensin-1 from Heloderma suspectum cinctum (Banded Gila monster).